A 610-amino-acid chain; its full sequence is ATP-dependent RNA helicase HAS1 (610 aa).

2 disordered regions span residues 1-81 (MTAA…AELK) and 112-131 (ALAV…DDPT). The span at 9 to 18 (KKRKRKHKAK) shows a compositional bias: basic residues. The span at 51 to 76 (PEVEDVVADASENDVESGAEEDEEQV) shows a compositional bias: acidic residues. A Q motif motif is present at residues 131–159 (TRFDELNLSERTMEAIKTMGFESMTEIQR). In terms of domain architecture, Helicase ATP-binding spans 162–337 (IPPLLSGKDV…RISLKAGPLY (176 aa)). 175–182 (AKTGSGKT) contributes to the ATP binding site. The short motif at 285–288 (DEAD) is the DEAD box element. The 171-residue stretch at 351 to 521 (GLEQGYVICD…NIQSQLEALI (171 aa)) folds into the Helicase C-terminal domain. The segment covering 584–594 (DKKVEGRREYG) has biased composition (basic and acidic residues). The segment at 584 to 610 (DKKVEGRREYGRQPQQGRRPMKPNKRF) is disordered.

Belongs to the DEAD box helicase family. DDX18/HAS1 subfamily. In terms of assembly, associates in the nucleolus with the 60S and pre-60S ribosomal subunits.

The protein localises to the nucleus. The protein resides in the nucleolus. It catalyses the reaction ATP + H2O = ADP + phosphate + H(+). In terms of biological role, ATP-dependent RNA helicase involved in 40S ribosomal subunit biogenesis. Required for the processing and cleavage of 35S pre-rRNA at sites A0, A1, and A2, leading to mature 18S rRNA. This chain is ATP-dependent RNA helicase HAS1 (HAS1), found in Phaeosphaeria nodorum (strain SN15 / ATCC MYA-4574 / FGSC 10173) (Glume blotch fungus).